We begin with the raw amino-acid sequence, 358 residues long: Alanine racemase (358 aa).

Lys-34 (proton acceptor; specific for D-alanine) is an active-site residue. Lys-34 is modified (N6-(pyridoxal phosphate)lysine). Residue Arg-129 coordinates substrate. The Proton acceptor; specific for L-alanine role is filled by Tyr-254. Met-302 contributes to the substrate binding site.

This sequence belongs to the alanine racemase family. Pyridoxal 5'-phosphate is required as a cofactor.

The catalysed reaction is L-alanine = D-alanine. Its pathway is amino-acid biosynthesis; D-alanine biosynthesis; D-alanine from L-alanine: step 1/1. In terms of biological role, catalyzes the interconversion of L-alanine and D-alanine. May also act on other amino acids. This Aliivibrio salmonicida (strain LFI1238) (Vibrio salmonicida (strain LFI1238)) protein is Alanine racemase (alr).